Consider the following 407-residue polypeptide: Arrestin domain-containing protein 2 (407 aa).

It belongs to the arrestin family. In terms of assembly, interacts with WWP1 (via WW domains).

The protein is Arrestin domain-containing protein 2 (Arrdc2) of Mus musculus (Mouse).